Here is a 336-residue protein sequence, read N- to C-terminus: MALDLEKLKFGTELIKRGFSSMTKGGVIMDVTTAEQAKIAEKAGAVAVMALERVPADIRAAGGVARMADPKKIREILDAVTIPVMAKVRIGHISEAYTLEKLGVDMLDESEVLTPADPFFHLYKKKLTVPVVSGARNLPEAVRRIFEGAAMVRTKGEAGTGNIIEAVRHIRKVNEEIAIVRRMTQDEIKTAAENIASSYFQLRNEASTDLFGQSGKVLYDDVYYGMSREKIVKGISDILRQIRKLNRLPVVNFAAGGVATPADGALMMELGADGVFVGSGIFKSPDPEKMAKSIVEAVENYKDYDVVARVSEGLQGMPGIDIESIPRDSRLQERGW.

Residue Asp30 coordinates D-ribose 5-phosphate. The active-site Schiff-base intermediate with D-ribose 5-phosphate is Lys87. Gly159 contacts D-ribose 5-phosphate. Arg171 is a D-glyceraldehyde 3-phosphate binding site. Residues Gly257 and 278 to 279 (GS) each bind D-ribose 5-phosphate.

This sequence belongs to the PdxS/SNZ family. In the presence of PdxT, forms a dodecamer of heterodimers.

It carries out the reaction aldehydo-D-ribose 5-phosphate + D-glyceraldehyde 3-phosphate + L-glutamine = pyridoxal 5'-phosphate + L-glutamate + phosphate + 3 H2O + H(+). Its pathway is cofactor biosynthesis; pyridoxal 5'-phosphate biosynthesis. In terms of biological role, catalyzes the formation of pyridoxal 5'-phosphate from ribose 5-phosphate (RBP), glyceraldehyde 3-phosphate (G3P) and ammonia. The ammonia is provided by the PdxT subunit. Can also use ribulose 5-phosphate and dihydroxyacetone phosphate as substrates, resulting from enzyme-catalyzed isomerization of RBP and G3P, respectively. In Thermoplasma volcanium (strain ATCC 51530 / DSM 4299 / JCM 9571 / NBRC 15438 / GSS1), this protein is Pyridoxal 5'-phosphate synthase subunit PdxS.